We begin with the raw amino-acid sequence, 356 residues long: Histidinol-phosphate aminotransferase (356 aa).

Lysine 211 is modified (N6-(pyridoxal phosphate)lysine).

Belongs to the class-II pyridoxal-phosphate-dependent aminotransferase family. Histidinol-phosphate aminotransferase subfamily. In terms of assembly, homodimer. Requires pyridoxal 5'-phosphate as cofactor.

It catalyses the reaction L-histidinol phosphate + 2-oxoglutarate = 3-(imidazol-4-yl)-2-oxopropyl phosphate + L-glutamate. The protein operates within amino-acid biosynthesis; L-histidine biosynthesis; L-histidine from 5-phospho-alpha-D-ribose 1-diphosphate: step 7/9. The chain is Histidinol-phosphate aminotransferase from Blochmanniella floridana.